A 227-amino-acid chain; its full sequence is Orotate phosphoribosyltransferase (227 aa).

The 5-phospho-alpha-D-ribose 1-diphosphate site is built by Lys-51, Arg-119, Lys-120, and Lys-123. Orotate-binding residues include Thr-149 and Arg-177.

Belongs to the purine/pyrimidine phosphoribosyltransferase family. PyrE subfamily. As to quaternary structure, homodimer. In terms of tissue distribution, expressed in body wall muscles, spermatheca and vulva muscles.

It catalyses the reaction orotidine 5'-phosphate + diphosphate = orotate + 5-phospho-alpha-D-ribose 1-diphosphate. It carries out the reaction UMP + diphosphate = 5-phospho-alpha-D-ribose 1-diphosphate + uracil. It participates in pyrimidine metabolism; UMP biosynthesis via de novo pathway; UMP from orotate: step 1/2. The protein operates within pyrimidine metabolism; UMP biosynthesis via salvage pathway; UMP from uracil: step 1/1. Phosphoribosyltransferase which catalyzes the formation of UMP from uracil in vitro and thus may be involved in UMP biosynthesis via the salvage pathway. May also participate in the first step of UMP synthesis by catalyzing the formation of orotidine 5'-phosphate, a UMP precursor, from orotate. In Caenorhabditis elegans, this protein is Orotate phosphoribosyltransferase.